The following is a 137-amino-acid chain: Large ribosomal subunit protein uL16 (137 aa).

It belongs to the universal ribosomal protein uL16 family. As to quaternary structure, part of the 50S ribosomal subunit.

Functionally, binds 23S rRNA and is also seen to make contacts with the A and possibly P site tRNAs. The chain is Large ribosomal subunit protein uL16 from Brucella abortus (strain S19).